The sequence spans 1216 residues: DNA polymerase subunit gamma-1 (1216 aa).

Residues 27–37 (SSSVLDPVPSD) show a composition bias toward low complexity. Residues 27 to 50 (SSSVLDPVPSDGQPQSQMPSSENG) are disordered. A compositionally biased stretch (polar residues) spans 38 to 50 (GQPQSQMPSSENG). An Exo I motif is present at residues 179-183 (VFDVE). Asp-181 (exonuclease activity) is an active-site residue. An Exo II motif is present at residues 250 to 258 (VGHNVSFDR). Residue Ser-289 participates in DNA binding. Over residues 301-314 (GKHKTQHPTKRGQK) the composition is skewed to basic residues. Residues 301-321 (GKHKTQHPTKRGQKSQKNANG) form a disordered region. An Exo III motif is present at residues 377-385 (YCARDVWAT). Residues 488–518 (TASASKLPIEGAGPFGDPMDQEDPGPPSEEE) form a disordered region. Residues 491 to 552 (ASKLPIEGAG…RPQHLPGHPG (62 aa)) form an accessory-interacting determinant region. The span at 506-518 (MDQEDPGPPSEEE) shows a compositional bias: acidic residues. Arg-560 provides a ligand contact to RNA. A DNA-binding site is contributed by Ser-574. Positions 731, 740, and 745 each coordinate RNA. 2 residues coordinate DNA: Lys-783 and Thr-826. The tract at residues 835-841 (TWLTASN) is trigger loop. Residues Ser-840 and Arg-846 each contribute to the RNA site. The short motif at 864–873 (VGADVDSQEL) is the Pol A element. The a 2'-deoxyribonucleoside 5'-triphosphate site is built by Asp-867, Val-868, Ser-870, Glu-872, Arg-920, Lys-924, and Tyr-928. Residues Asp-867 and Val-868 each contribute to the Mg(2+) site. The short motif at 920 to 935 (REHAKVFNYGRIYGAG) is the Pol B element. DNA is bound by residues Thr-1071 and Ser-1072. Positions 1111 to 1118 (HDEVRYLV) match the Pol C motif. Asp-1112 lines the a 2'-deoxyribonucleoside 5'-triphosphate pocket. Residue Asp-1112 participates in Mg(2+) binding.

It belongs to the DNA polymerase type-A family. Heterotrimer composed of a catalytic subunit and a homodimer of accessory subunits (POLG:POLG2). Interacts with TTC3. Interacts with LIG3. Requires Mg(2+) as cofactor.

It is found in the mitochondrion. The protein localises to the mitochondrion matrix. It localises to the mitochondrion nucleoid. It catalyses the reaction DNA(n) + a 2'-deoxyribonucleoside 5'-triphosphate = DNA(n+1) + diphosphate. The catalysed reaction is a 3'-end 2'-deoxyribonucleotidyl-deoxyribonucleotide-DNA + H2O = a 3'-end 2'-deoxyribonucleotide-DNA + a 2'-deoxyribonucleoside 5'-phosphate + H(+). It carries out the reaction a 5'-end 2'-deoxyribose-2'-deoxyribonucleotide-DNA = (2E,4S)-4-hydroxypenten-2-al-5-phosphate + a 5'-end 5'-phospho-2'-deoxyribonucleoside-DNA + H(+). With respect to regulation, inhibited by dideoxynucleotides such as antiviral agent zalcitabine. In terms of biological role, catalytic subunit of DNA polymerase gamma solely responsible for replication of mitochondrial DNA (mtDNA). Replicates both heavy and light strands of the circular mtDNA genome using a single-stranded DNA template, RNA primers and the four deoxyribonucleoside triphosphates as substrates. Has 5' -&gt; 3' polymerase activity. Functionally interacts with TWNK and SSBP1 at the replication fork to form a highly processive replisome, where TWNK unwinds the double-stranded DNA template prior to replication and SSBP1 covers the parental heavy strand to enable continuous replication of the entire mitochondrial genome. A single nucleotide incorporation cycle includes binding of the incoming nucleotide at the insertion site, a phosphodiester bond formation reaction that extends the 3'-end of the primer DNA, and translocation of the primer terminus to the post-insertion site. After completing replication of a mtDNA strand, mediates 3' -&gt; 5' exonucleolytic degradation at the nick to enable proper ligation. Highly accurate due to high nucleotide selectivity and 3' -&gt; 5' exonucleolytic proofreading. Proficiently corrects base substitutions, single-base additions and deletions in non-repetitive sequences and short repeats, but displays lower proofreading activity when replicating longer homopolymeric stretches. Exerts exonuclease activity toward single-stranded DNA and double-stranded DNA containing 3'-terminal mispairs. When a misincorporation occurs, transitions from replication to a pro-nucleolytic editing mode and removes the missincorporated nucleoside in the exonuclease active site. Proceeds via an SN2 nucleolytic mechanism in which Asp-198 catalyzes phosphodiester bond hydrolysis and Glu-200 stabilizes the leaving group. As a result the primer strand becomes one nucleotide shorter and is positioned in the post-insertion site, ready to resume DNA synthesis. Exerts 5'-deoxyribose phosphate (dRP) lyase activity and mediates repair-associated mtDNA synthesis (gap filling) in base-excision repair pathway. Catalyzes the release of the 5'-terminal 2-deoxyribose-5-phosphate sugar moiety from incised apurinic/apyrimidinic (AP) sites to produce a substrate for DNA ligase. The dRP lyase reaction does not require divalent metal ions and likely proceeds via a Schiff base intermediate in a beta-elimination reaction mechanism. The chain is DNA polymerase subunit gamma-1 from Rattus norvegicus (Rat).